A 104-amino-acid polypeptide reads, in one-letter code: UPF0473 protein LJ_0477 (104 aa).

It belongs to the UPF0473 family.

This is UPF0473 protein LJ_0477 from Lactobacillus johnsonii (strain CNCM I-12250 / La1 / NCC 533).